We begin with the raw amino-acid sequence, 196 residues long: Probable malonic semialdehyde reductase RutE (196 aa).

This sequence belongs to the nitroreductase family. HadB/RutE subfamily. Requires FMN as cofactor.

The catalysed reaction is 3-hydroxypropanoate + NADP(+) = 3-oxopropanoate + NADPH + H(+). Functionally, may reduce toxic product malonic semialdehyde to 3-hydroxypropionic acid, which is excreted. The sequence is that of Probable malonic semialdehyde reductase RutE from Klebsiella pneumoniae (strain 342).